A 321-amino-acid polypeptide reads, in one-letter code: Probable E3 ubiquitin-protein ligase BAH1-like 1 (321 aa).

Residues 1–149 (MKFAKKYEKY…YSKQGQEFKA (149 aa)) form the SPX domain. An RING-type zinc finger spans residues 217 to 266 (CSICLDTVFDPVALSCGHIYCYLCSCSAASVTIVDGLKSAERKSKCPLCR).

This sequence belongs to the RING-type zinc finger family.

The enzyme catalyses S-ubiquitinyl-[E2 ubiquitin-conjugating enzyme]-L-cysteine + [acceptor protein]-L-lysine = [E2 ubiquitin-conjugating enzyme]-L-cysteine + N(6)-ubiquitinyl-[acceptor protein]-L-lysine.. It participates in protein modification; protein ubiquitination. The polypeptide is Probable E3 ubiquitin-protein ligase BAH1-like 1 (Oryza sativa subsp. indica (Rice)).